A 115-amino-acid chain; its full sequence is Large ribosomal subunit protein uL18 (115 aa).

Positions 1-29 (MISKPDKNKLRQKRHTRVRGKISGTSETP) are disordered. The span at 10–20 (LRQKRHTRVRG) shows a compositional bias: basic residues.

The protein belongs to the universal ribosomal protein uL18 family. As to quaternary structure, part of the 50S ribosomal subunit; part of the 5S rRNA/L5/L18/L25 subcomplex. Contacts the 5S and 23S rRNAs.

This is one of the proteins that bind and probably mediate the attachment of the 5S RNA into the large ribosomal subunit, where it forms part of the central protuberance. The protein is Large ribosomal subunit protein uL18 of Lactococcus lactis subsp. lactis (strain IL1403) (Streptococcus lactis).